The following is a 283-amino-acid chain: Elongation factor Ts (283 aa).

The interval 80 to 83 (TDFV) is involved in Mg(2+) ion dislocation from EF-Tu.

The protein belongs to the EF-Ts family.

It localises to the cytoplasm. Its function is as follows. Associates with the EF-Tu.GDP complex and induces the exchange of GDP to GTP. It remains bound to the aminoacyl-tRNA.EF-Tu.GTP complex up to the GTP hydrolysis stage on the ribosome. The sequence is that of Elongation factor Ts from Serratia proteamaculans (strain 568).